We begin with the raw amino-acid sequence, 323 residues long: 4-hydroxy-3-methylbut-2-enyl diphosphate reductase (323 aa).

[4Fe-4S] cluster is bound at residue cysteine 21. Residues histidine 50 and histidine 83 each coordinate (2E)-4-hydroxy-3-methylbut-2-enyl diphosphate. 2 residues coordinate dimethylallyl diphosphate: histidine 50 and histidine 83. Isopentenyl diphosphate-binding residues include histidine 50 and histidine 83. [4Fe-4S] cluster is bound at residue cysteine 105. Histidine 133 contributes to the (2E)-4-hydroxy-3-methylbut-2-enyl diphosphate binding site. Position 133 (histidine 133) interacts with dimethylallyl diphosphate. Histidine 133 is a binding site for isopentenyl diphosphate. Catalysis depends on glutamate 135, which acts as the Proton donor. Threonine 173 is a (2E)-4-hydroxy-3-methylbut-2-enyl diphosphate binding site. Cysteine 203 lines the [4Fe-4S] cluster pocket. The (2E)-4-hydroxy-3-methylbut-2-enyl diphosphate site is built by serine 231, serine 232, asparagine 233, and serine 276. Dimethylallyl diphosphate-binding residues include serine 231, serine 232, asparagine 233, and serine 276. Residues serine 231, serine 232, asparagine 233, and serine 276 each coordinate isopentenyl diphosphate.

It belongs to the IspH family. [4Fe-4S] cluster serves as cofactor.

The catalysed reaction is isopentenyl diphosphate + 2 oxidized [2Fe-2S]-[ferredoxin] + H2O = (2E)-4-hydroxy-3-methylbut-2-enyl diphosphate + 2 reduced [2Fe-2S]-[ferredoxin] + 2 H(+). It catalyses the reaction dimethylallyl diphosphate + 2 oxidized [2Fe-2S]-[ferredoxin] + H2O = (2E)-4-hydroxy-3-methylbut-2-enyl diphosphate + 2 reduced [2Fe-2S]-[ferredoxin] + 2 H(+). Its pathway is isoprenoid biosynthesis; dimethylallyl diphosphate biosynthesis; dimethylallyl diphosphate from (2E)-4-hydroxy-3-methylbutenyl diphosphate: step 1/1. It functions in the pathway isoprenoid biosynthesis; isopentenyl diphosphate biosynthesis via DXP pathway; isopentenyl diphosphate from 1-deoxy-D-xylulose 5-phosphate: step 6/6. Its function is as follows. Catalyzes the conversion of 1-hydroxy-2-methyl-2-(E)-butenyl 4-diphosphate (HMBPP) into a mixture of isopentenyl diphosphate (IPP) and dimethylallyl diphosphate (DMAPP). Acts in the terminal step of the DOXP/MEP pathway for isoprenoid precursor biosynthesis. The chain is 4-hydroxy-3-methylbut-2-enyl diphosphate reductase from Cutibacterium acnes (strain DSM 16379 / KPA171202) (Propionibacterium acnes).